A 339-amino-acid chain; its full sequence is Dihydroorotase (339 aa).

Residues histidine 12 and histidine 14 each contribute to the Zn(2+) site. Substrate contacts are provided by residues histidine 14–arginine 16 and asparagine 40. Zn(2+) contacts are provided by lysine 94, histidine 133, histidine 167, and aspartate 239. Lysine 94 bears the N6-carboxylysine mark. Histidine 133 is a substrate binding site. The active site involves aspartate 239. Residues histidine 243 and alanine 255 each coordinate substrate.

It belongs to the metallo-dependent hydrolases superfamily. DHOase family. Class II DHOase subfamily. Homodimer. Zn(2+) serves as cofactor.

It carries out the reaction (S)-dihydroorotate + H2O = N-carbamoyl-L-aspartate + H(+). It functions in the pathway pyrimidine metabolism; UMP biosynthesis via de novo pathway; (S)-dihydroorotate from bicarbonate: step 3/3. Its function is as follows. Catalyzes the reversible cyclization of carbamoyl aspartate to dihydroorotate. The sequence is that of Dihydroorotase from Helicobacter pylori (strain P12).